The following is a 245-amino-acid chain: Eukaryotic translation initiation factor 6 (245 aa).

Phosphoserine; by CK1 occurs at positions 174 and 175.

The protein belongs to the eIF-6 family. In terms of assembly, monomer. Associates with the 60S ribosomal subunit. Post-translationally, phosphorylation at Ser-174 and Ser-175 promotes nuclear export.

It is found in the cytoplasm. It localises to the nucleus. The protein localises to the nucleolus. Binds to the 60S ribosomal subunit and prevents its association with the 40S ribosomal subunit to form the 80S initiation complex in the cytoplasm. Is also involved in ribosome biogenesis. Associates with pre-60S subunits in the nucleus and is involved in its nuclear export. The polypeptide is Eukaryotic translation initiation factor 6 (Candida albicans (strain SC5314 / ATCC MYA-2876) (Yeast)).